Here is a 195-residue protein sequence, read N- to C-terminus: U8 snoRNA-decapping enzyme (195 aa).

Residues 18 to 173 enclose the Nudix hydrolase domain; that stretch reads GWRHACHALL…IGSAREQLLE (156 aa). 3 residues coordinate substrate: His-24, Arg-50, and Phe-57. Residues Gly-59, Glu-76, Glu-80, and His-99 each contribute to the Mn(2+) site. The Nudix box motif lies at 61–82; it reads FVDTQDRSLEDGLNRELREELG. Gln-170 contacts substrate. Glu-173 is a binding site for Mn(2+).

This sequence belongs to the Nudix hydrolase family. NUDT16 subfamily. As to quaternary structure, homodimer. Requires Mg(2+) as cofactor. The cofactor is Mn(2+). Co(2+) is required as a cofactor. Expressed strongly in lung, kidney, adrenal gland, testis, heart and brain.

The protein localises to the nucleus. Its subcellular location is the nucleoplasm. It localises to the nucleolus. The protein resides in the cytoplasm. It carries out the reaction a 5'-end (N(7)-methyl 5'-triphosphoguanosine)-ribonucleoside in mRNA + H2O = N(7)-methyl-GDP + a 5'-end phospho-ribonucleoside in mRNA + 2 H(+). The catalysed reaction is IDP + H2O = IMP + phosphate + H(+). The enzyme catalyses dIDP + H2O = dIMP + phosphate + H(+). It catalyses the reaction a 5'-end NAD(+)-phospho-ribonucleoside in mRNA + H2O = a 5'-end phospho-adenosine-phospho-ribonucleoside in mRNA + beta-nicotinamide D-ribonucleotide + 2 H(+). It carries out the reaction a 5'-end FAD-phospho-ribonucleoside in mRNA + H2O = a 5'-end phospho-adenosine-phospho-ribonucleoside in mRNA + FMN + 2 H(+). The catalysed reaction is a 5'-end CoA-ribonucleoside in mRNA + H2O = a 5'-end phospho-adenosine-phospho-ribonucleoside in mRNA + (R)-4'-phosphopantetheine + 2 H(+). Its activity is regulated as follows. The phosphatase activity is inhibited by the product IMP. Functionally, RNA-binding and decapping enzyme that catalyzes the cleavage of the cap structure of snoRNAs and mRNAs in a metal-dependent manner. Part of the U8 snoRNP complex that is required for the accumulation of mature 5.8S and 28S rRNA. Has diphosphatase activity and removes m7G and/or m227G caps from U8 snoRNA and leaves a 5'monophosphate on the RNA. Also catalyzes the cleavage of the cap structure on mRNAs. Does not hydrolyze cap analog structures like 7-methylguanosine nucleoside triphosphate (m7GpppG). Also hydrolysis m7G- and m227G U3-capped RNAs but with less efficiencies. Has broad substrate specificity with manganese or cobalt as cofactor and can act on various RNA species. Binds to the U8 snoRNA; metal is not required for RNA-binding. May play a role in the regulation of snoRNAs and mRNAs degradation. Also acts as a phosphatase; hydrolyzes the non-canonical purine nucleotides inosine diphosphate (IDP) and deoxyinosine diphosphate (dITP) as well as guanosine diphosphate (GDP), deoxyguanosine diphosphate (dGDP), xanthine diphosphate (XDP), inosine triphosphate (ITP) and deoxyinosine triphosphate (ITP) to their respective monophosphate derivatives and does not distinguish between the deoxy- and ribose forms. The order of activity with different substrates is IDP &gt; dIDP &gt;&gt; GDP = dGDP &gt; XDP = ITP = dITP. Binds strongly to GTP, ITP and XTP. Participates in the hydrolysis of dIDP/IDP and probably excludes non-canonical purines from RNA and DNA precursor pools, thus preventing their incorporation into RNA and DNA and avoiding chromosomal lesions. Exhibits decapping activity towards NAD-capped RNAs and FAD-capped RNAs. Exhibits decapping activity towards dpCoA-capped RNAs in vitro. This chain is U8 snoRNA-decapping enzyme (NUDT16), found in Homo sapiens (Human).